Reading from the N-terminus, the 51-residue chain is Small ribosomal subunit protein uS13 (51 aa).

The protein belongs to the universal ribosomal protein uS13 family. As to quaternary structure, part of the 30S ribosomal subunit. Forms a loose heterodimer with protein S19. Forms two bridges to the 50S subunit in the 70S ribosome.

Located at the top of the head of the 30S subunit, it contacts several helices of the 16S rRNA. In the 70S ribosome it contacts the 23S rRNA (bridge B1a) and protein L5 of the 50S subunit (bridge B1b), connecting the 2 subunits; these bridges are implicated in subunit movement. Contacts the tRNAs in the A and P-sites. This is Small ribosomal subunit protein uS13 (rpsM) from Lactococcus lactis subsp. cremoris (Streptococcus cremoris).